The following is a 269-amino-acid chain: MLYLGVIGYPIKHSVSPAMHNAALQHEGIEGIYLAFEVKPDRLRDAVFGAKALGFRGLNVTIPFKESVVEFVELEGEAAKIKTVNTIDLVEMVGYNTDVYGVKAALSGTELGGKTALVVGAGGAGKAAALALLDMGSTVIVANRTEEKGREAVEMLRRYGECIFWPLSRVEELKGKVDVVVNATPLGMRGFKAEIPVPPSMLDGVELVFDTVYNPMETPLIREAKKRGCKVVYGIEMLVHQGAKAFEIWTGIEPDVGVMREAALRALRF.

Shikimate-binding positions include 14–16 (SVS) and threonine 61. Residue lysine 65 is the Proton acceptor of the active site. Shikimate-binding residues include asparagine 85 and aspartate 98. Residues 120–124 (GAGGA), 143–148 (NRTEEK), and threonine 211 each bind NADP(+). Tyrosine 213 provides a ligand contact to shikimate. NADP(+) is bound at residue glycine 234.

Belongs to the shikimate dehydrogenase family. Homodimer.

The catalysed reaction is shikimate + NADP(+) = 3-dehydroshikimate + NADPH + H(+). The protein operates within metabolic intermediate biosynthesis; chorismate biosynthesis; chorismate from D-erythrose 4-phosphate and phosphoenolpyruvate: step 4/7. Functionally, involved in the biosynthesis of the chorismate, which leads to the biosynthesis of aromatic amino acids. Catalyzes the reversible NADPH linked reduction of 3-dehydroshikimate (DHSA) to yield shikimate (SA). This chain is Shikimate dehydrogenase (NADP(+)), found in Archaeoglobus fulgidus (strain ATCC 49558 / DSM 4304 / JCM 9628 / NBRC 100126 / VC-16).